A 119-amino-acid chain; its full sequence is Large ribosomal subunit protein uL18 (119 aa).

The protein belongs to the universal ribosomal protein uL18 family. Part of the 50S ribosomal subunit; part of the 5S rRNA/L5/L18/L25 subcomplex. Contacts the 5S and 23S rRNAs.

In terms of biological role, this is one of the proteins that bind and probably mediate the attachment of the 5S RNA into the large ribosomal subunit, where it forms part of the central protuberance. This chain is Large ribosomal subunit protein uL18, found in Roseobacter denitrificans (strain ATCC 33942 / OCh 114) (Erythrobacter sp. (strain OCh 114)).